We begin with the raw amino-acid sequence, 114 residues long: Aspartate 1-decarboxylase (114 aa).

Ser25 (schiff-base intermediate with substrate; via pyruvic acid) is an active-site residue. At Ser25 the chain carries Pyruvic acid (Ser). Residue Thr57 participates in substrate binding. Residue Tyr58 is the Proton donor of the active site. Gly73 to Ala75 is a substrate binding site.

Belongs to the PanD family. As to quaternary structure, heterooctamer of four alpha and four beta subunits. Pyruvate is required as a cofactor. In terms of processing, is synthesized initially as an inactive proenzyme, which is activated by self-cleavage at a specific serine bond to produce a beta-subunit with a hydroxyl group at its C-terminus and an alpha-subunit with a pyruvoyl group at its N-terminus.

The protein resides in the cytoplasm. It catalyses the reaction L-aspartate + H(+) = beta-alanine + CO2. It participates in cofactor biosynthesis; (R)-pantothenate biosynthesis; beta-alanine from L-aspartate: step 1/1. Functionally, catalyzes the pyruvoyl-dependent decarboxylation of aspartate to produce beta-alanine. In Thermotoga sp. (strain RQ2), this protein is Aspartate 1-decarboxylase.